Here is a 284-residue protein sequence, read N- to C-terminus: Bifunctional protein FolD 1 (284 aa).

Residues 166-168 and isoleucine 232 contribute to the NADP(+) site; that span reads GAS.

The protein belongs to the tetrahydrofolate dehydrogenase/cyclohydrolase family. As to quaternary structure, homodimer.

It carries out the reaction (6R)-5,10-methylene-5,6,7,8-tetrahydrofolate + NADP(+) = (6R)-5,10-methenyltetrahydrofolate + NADPH. It catalyses the reaction (6R)-5,10-methenyltetrahydrofolate + H2O = (6R)-10-formyltetrahydrofolate + H(+). It functions in the pathway one-carbon metabolism; tetrahydrofolate interconversion. Its function is as follows. Catalyzes the oxidation of 5,10-methylenetetrahydrofolate to 5,10-methenyltetrahydrofolate and then the hydrolysis of 5,10-methenyltetrahydrofolate to 10-formyltetrahydrofolate. The polypeptide is Bifunctional protein FolD 1 (Pseudomonas syringae pv. syringae (strain B728a)).